The chain runs to 267 residues: Hydroxyethylthiazole kinase (267 aa).

Met-51 contributes to the substrate binding site. 2 residues coordinate ATP: Arg-127 and Ser-173. Substrate is bound at residue Ala-200.

This sequence belongs to the Thz kinase family. It depends on Mg(2+) as a cofactor.

The enzyme catalyses 5-(2-hydroxyethyl)-4-methylthiazole + ATP = 4-methyl-5-(2-phosphooxyethyl)-thiazole + ADP + H(+). Its pathway is cofactor biosynthesis; thiamine diphosphate biosynthesis; 4-methyl-5-(2-phosphoethyl)-thiazole from 5-(2-hydroxyethyl)-4-methylthiazole: step 1/1. Its function is as follows. Catalyzes the phosphorylation of the hydroxyl group of 4-methyl-5-beta-hydroxyethylthiazole (THZ). The chain is Hydroxyethylthiazole kinase from Psychromonas ingrahamii (strain DSM 17664 / CCUG 51855 / 37).